The sequence spans 227 residues: Trypsin (227 aa).

The region spanning 1–223 (IVGGEDANVQ…YYDVLMEQIN (223 aa)) is the Peptidase S1 domain. Cysteines 27 and 43 form a disulfide. Catalysis depends on charge relay system residues histidine 42 and aspartate 88. Intrachain disulfides connect cysteine 150-cysteine 164 and cysteine 175-cysteine 199. The active-site Charge relay system is serine 179.

The protein belongs to the peptidase S1 family.

The catalysed reaction is Preferential cleavage: Arg-|-Xaa, Lys-|-Xaa.. In Saccharopolyspora erythraea (Streptomyces erythraeus), this protein is Trypsin.